Reading from the N-terminus, the 97-residue chain is MPRSLRKGPYVYYKLQRKVDALNESDEKKVIKTWSRDSIITPDFVGHTFAVHNGHQFIPVYVTENMVGHKLGEFAPTRTFTEHSQAKVDQRIRKPGQ.

The protein belongs to the universal ribosomal protein uS19 family.

Functionally, protein S19 forms a complex with S13 that binds strongly to the 16S ribosomal RNA. This Salinibacter ruber (strain DSM 13855 / M31) protein is Small ribosomal subunit protein uS19.